Here is a 230-residue protein sequence, read N- to C-terminus: MSNTRHKIKAVILLSGGLDSTTTLAIAKTKNFECYSLSFDYGQKQKSELKSAENFAKIFGSIKHRVMKISLSNIDFSALTDDKIDIPKFSKSDDIPITYVPARNTIFLSYALSWSEVLDCQHIFIGVNTLDYSGYPDCREIYIKAFEVMANLATKQSIEGKKLTIHTPLIHLNKAQIIKKGLSLGIDYSLTTTCYQADKSGKACGICDACEYRKLGFIEAKVADPTRYQI.

14–24 lines the ATP pocket; that stretch reads LSGGLDSTTTL. Zn(2+)-binding residues include cysteine 194, cysteine 204, cysteine 207, and cysteine 210.

This sequence belongs to the QueC family. The cofactor is Zn(2+).

The enzyme catalyses 7-carboxy-7-deazaguanine + NH4(+) + ATP = 7-cyano-7-deazaguanine + ADP + phosphate + H2O + H(+). It participates in purine metabolism; 7-cyano-7-deazaguanine biosynthesis. Functionally, catalyzes the ATP-dependent conversion of 7-carboxy-7-deazaguanine (CDG) to 7-cyano-7-deazaguanine (preQ(0)). In Ruthia magnifica subsp. Calyptogena magnifica, this protein is 7-cyano-7-deazaguanine synthase.